Consider the following 60-residue polypeptide: Large ribosomal subunit protein bL32 (60 aa).

Basic residues predominate over residues M1–H19. The interval M1–P24 is disordered.

Belongs to the bacterial ribosomal protein bL32 family.

The polypeptide is Large ribosomal subunit protein bL32 (Wolbachia pipientis wMel).